The primary structure comprises 93 residues: Signal recognition particle 19 kDa protein (93 aa).

Belongs to the SRP19 family. In terms of assembly, part of the signal recognition particle protein translocation system, which is composed of SRP and FtsY. Archaeal SRP consists of a 7S RNA molecule of 300 nucleotides and two protein subunits: SRP54 and SRP19.

It localises to the cytoplasm. Functionally, involved in targeting and insertion of nascent membrane proteins into the cytoplasmic membrane. Binds directly to 7S RNA and mediates binding of the 54 kDa subunit of the SRP. This is Signal recognition particle 19 kDa protein from Haloquadratum walsbyi (strain DSM 16790 / HBSQ001).